A 617-amino-acid polypeptide reads, in one-letter code: Type VII secretion systems protein EssD (617 aa).

The segment at glutamine 420–serine 448 is disordered. The segment covering glycine 426–histidine 438 has biased composition (basic and acidic residues).

Belongs to the EssD family. In terms of assembly, interacts (via C-terminal) with EssG; this interaction blocks EssD activity. Interacts with EssE.

Its subcellular location is the secreted. The protein resides in the cell membrane. Functionally, component of the type VII secretion system (Ess). Plays a role in Ess secretion during infection. Required for the efficient secretion of EsxA. Required for abscess formation and staphylococcal persistence in host tissue. Possesses a toxic DNase activity that is modulated by EssG by forming a nuclease toxin-antitoxin pair. This nuclease toxin targets competitor bacteria. This chain is Type VII secretion systems protein EssD, found in Staphylococcus aureus (strain Newman).